The chain runs to 222 residues: Protein SHI RELATED SEQUENCE 4 (222 aa).

6 residues coordinate Zn(2+): cysteine 72, cysteine 75, cysteine 83, cysteine 88, cysteine 92, and cysteine 99. Residues 72-99 (CQECGNQAKKGCTHGRCRTCCKSNGLHC) constitute a DNA-binding region (zn(2)-C6 fungal-type; degenerate). Residues 114 to 137 (RERQQQLQTPTSNPTGGSGRVGKY) form a disordered region. Polar residues predominate over residues 118–128 (QQLQTPTSNPT). Residues 191–194 (IAGH) carry the Required for homo- and heterodimerization motif.

The protein belongs to the SHI protein family. Expressed in cotyledon tips, leaf primordia, hydathodes, stipules, and lateral root primordia and weakly at the edges of petals and sepals.

The protein resides in the nucleus. Functionally, transcription activator that binds DNA on 5'-ACTCTAC-3' and promotes auxin homeostasis-regulating gene expression (e.g. YUC genes), as well as genes affecting stamen development, cell expansion and timing of flowering. Synergistically with other SHI-related proteins, regulates gynoecium, stamen and leaf development in a dose-dependent manner, controlling apical-basal patterning. Promotes style and stigma formation, and influences vascular development during gynoecium development. May also have a role in the formation and/or maintenance of the shoot apical meristem (SAM). The chain is Protein SHI RELATED SEQUENCE 4 (SRS4) from Arabidopsis thaliana (Mouse-ear cress).